The following is a 258-amino-acid chain: Hydroxyacylglutathione hydrolase (258 aa).

7 residues coordinate Zn(2+): His52, His54, Asp56, His57, His109, Asp126, and His164.

The protein belongs to the metallo-beta-lactamase superfamily. Glyoxalase II family. Monomer. It depends on Zn(2+) as a cofactor.

The catalysed reaction is an S-(2-hydroxyacyl)glutathione + H2O = a 2-hydroxy carboxylate + glutathione + H(+). It participates in secondary metabolite metabolism; methylglyoxal degradation; (R)-lactate from methylglyoxal: step 2/2. Thiolesterase that catalyzes the hydrolysis of S-D-lactoyl-glutathione to form glutathione and D-lactic acid. In Xylella fastidiosa (strain M12), this protein is Hydroxyacylglutathione hydrolase.